The following is a 280-amino-acid chain: Equatorin (280 aa).

Positions Met-1–Ser-19 are cleaved as a signal peptide. Topologically, residues Leu-20 to Lys-183 are vesicular. Positions Ala-112 to Pro-131 are disordered. Basic and acidic residues predominate over residues Glu-117–Arg-126. Asn-145 is a glycosylation site (N-linked (GlcNAc...) asparagine). Residues Leu-184–Phe-204 traverse the membrane as a helical segment. Over Ala-205–Glu-280 the chain is Cytoplasmic. At Ser-279 the chain carries Phosphoserine.

As to quaternary structure, interacts with SNAP25. Post-translationally, highly N- and O-glycosylated; contains sialic acid. As to expression, highly expressed in testis and epididymis. Low expression in other tissues.

The protein resides in the cytoplasmic vesicle. Its subcellular location is the secretory vesicle. It localises to the acrosome membrane. The protein localises to the acrosome inner membrane. It is found in the acrosome outer membrane. Its function is as follows. Acrosomal membrane-anchored protein involved in the process of fertilization and in acrosome biogenesis. The chain is Equatorin (Eqtn) from Rattus norvegicus (Rat).